Reading from the N-terminus, the 270-residue chain is 4-hydroxy-tetrahydrodipicolinate reductase (270 aa).

NAD(+) contacts are provided by residues 11-16 (GAGGRM) and E37. Residue R38 participates in NADP(+) binding. Residues 101-103 (GTT) and 125-128 (APNM) each bind NAD(+). The Proton donor/acceptor role is filled by H158. H159 is a binding site for (S)-2,3,4,5-tetrahydrodipicolinate. Catalysis depends on K162, which acts as the Proton donor. 168–169 (GT) contributes to the (S)-2,3,4,5-tetrahydrodipicolinate binding site.

The protein belongs to the DapB family.

The protein localises to the cytoplasm. It carries out the reaction (S)-2,3,4,5-tetrahydrodipicolinate + NAD(+) + H2O = (2S,4S)-4-hydroxy-2,3,4,5-tetrahydrodipicolinate + NADH + H(+). It catalyses the reaction (S)-2,3,4,5-tetrahydrodipicolinate + NADP(+) + H2O = (2S,4S)-4-hydroxy-2,3,4,5-tetrahydrodipicolinate + NADPH + H(+). It functions in the pathway amino-acid biosynthesis; L-lysine biosynthesis via DAP pathway; (S)-tetrahydrodipicolinate from L-aspartate: step 4/4. Its function is as follows. Catalyzes the conversion of 4-hydroxy-tetrahydrodipicolinate (HTPA) to tetrahydrodipicolinate. The polypeptide is 4-hydroxy-tetrahydrodipicolinate reductase (Shewanella baltica (strain OS223)).